The chain runs to 115 residues: MNPLIQSLTEGQLRTDIPSFRPGDTVRVHAKVVEGNRERIQIFEGVVIARKGAGISENYTVRKISNGIGVERIFPIHTPRVEKIEVVRYGKVRRAKLYYLRALQGKAARIKEIRR.

This sequence belongs to the bacterial ribosomal protein bL19 family.

Functionally, this protein is located at the 30S-50S ribosomal subunit interface and may play a role in the structure and function of the aminoacyl-tRNA binding site. The polypeptide is Large ribosomal subunit protein bL19 (Streptococcus pneumoniae serotype 2 (strain D39 / NCTC 7466)).